The chain runs to 433 residues: Homogentisate 1,2-dioxygenase (433 aa).

The active-site Proton acceptor is the His288. The Fe cation site is built by His331 and Glu337. Homogentisate is bound by residues Tyr346 and His367. His367 contributes to the Fe cation binding site.

It belongs to the homogentisate dioxygenase family. Hexamer; dimer of trimers. The cofactor is Fe cation.

The catalysed reaction is homogentisate + O2 = 4-maleylacetoacetate + H(+). It functions in the pathway amino-acid degradation; L-phenylalanine degradation; acetoacetate and fumarate from L-phenylalanine: step 4/6. Involved in the catabolism of homogentisate (2,5-dihydroxyphenylacetate or 2,5-OH-PhAc), a central intermediate in the degradation of phenylalanine and tyrosine. Catalyzes the oxidative ring cleavage of the ar omatic ring of 2,5-dihydroxyphenylacetate to yield maleylacetoacetate. In Pseudomonas putida (strain ATCC 47054 / DSM 6125 / CFBP 8728 / NCIMB 11950 / KT2440), this protein is Homogentisate 1,2-dioxygenase.